We begin with the raw amino-acid sequence, 224 residues long: Pyridoxine/pyridoxamine 5'-phosphate oxidase (224 aa).

FMN contacts are provided by residues 69–74 (RHVLLK), 83–84 (FT), Arg89, Lys90, and Gln112. Lys74 lines the substrate pocket. Residues Tyr130, Arg134, and Ser138 each coordinate substrate. Residues 148–149 (QS) and Trp194 each bind FMN. Residue 200–202 (RMH) participates in substrate binding. Arg204 contacts FMN.

It belongs to the pyridoxamine 5'-phosphate oxidase family. As to quaternary structure, homodimer. FMN serves as cofactor.

It carries out the reaction pyridoxamine 5'-phosphate + O2 + H2O = pyridoxal 5'-phosphate + H2O2 + NH4(+). The catalysed reaction is pyridoxine 5'-phosphate + O2 = pyridoxal 5'-phosphate + H2O2. Its pathway is cofactor metabolism; pyridoxal 5'-phosphate salvage; pyridoxal 5'-phosphate from pyridoxamine 5'-phosphate: step 1/1. The protein operates within cofactor metabolism; pyridoxal 5'-phosphate salvage; pyridoxal 5'-phosphate from pyridoxine 5'-phosphate: step 1/1. In terms of biological role, catalyzes the oxidation of either pyridoxine 5'-phosphate (PNP) or pyridoxamine 5'-phosphate (PMP) into pyridoxal 5'-phosphate (PLP). The sequence is that of Pyridoxine/pyridoxamine 5'-phosphate oxidase from Acidothermus cellulolyticus (strain ATCC 43068 / DSM 8971 / 11B).